A 489-amino-acid chain; its full sequence is Rhamnulokinase (489 aa).

13 to 17 (ASSGR) contacts ATP. Cysteine 68 and cysteine 222 form a disulfide bridge. Substrate-binding positions include glycine 83 and 236–238 (HDT). Residue aspartate 237 is the Proton acceptor of the active site. Threonine 259 contributes to the ATP binding site. Asparagine 296 contributes to the substrate binding site. ATP is bound at residue glutamine 304. Residues cysteine 353 and cysteine 370 are joined by a disulfide bond. Position 402 (glycine 402) interacts with ATP. A disulfide bond links cysteine 413 and cysteine 417.

It belongs to the rhamnulokinase family. Requires Mg(2+) as cofactor.

The catalysed reaction is L-rhamnulose + ATP = L-rhamnulose 1-phosphate + ADP + H(+). Its pathway is carbohydrate degradation; L-rhamnose degradation; glycerone phosphate from L-rhamnose: step 2/3. Its function is as follows. Involved in the catabolism of L-rhamnose (6-deoxy-L-mannose). Catalyzes the transfer of the gamma-phosphate group from ATP to the 1-hydroxyl group of L-rhamnulose to yield L-rhamnulose 1-phosphate. The polypeptide is Rhamnulokinase (Salmonella agona (strain SL483)).